The primary structure comprises 769 residues: Probable protease Ga0334635_1659 (769 aa).

Positions 118-167 are disordered; it reads VARGSSDNNGAPPLSFTLSHGDPKSDPEPSSPSRLVNTGLSEAERPESPL.

Probably a dedicated protease for substrate gasdermin bGSDM; cleaves the bGSDM precursor, releasing the pore-forming moiety, which integrates into the membrane and triggers cell death. Involved in defense against bacteriophages. Expression of gasdermin bGSDM and this neighboring protease is toxic in E.coli. In Vitiosangium sp. (strain GDMCC 1.1324), this protein is Probable protease Ga0334635_1659.